Here is a 158-residue protein sequence, read N- to C-terminus: ATP synthase subunit b' (158 aa).

A helical membrane pass occupies residues Ala24 to Phe44.

Belongs to the ATPase B chain family. In terms of assembly, F-type ATPases have 2 components, F(1) - the catalytic core - and F(0) - the membrane proton channel. F(1) has five subunits: alpha(3), beta(3), gamma(1), delta(1), epsilon(1). F(0) has four main subunits: a(1), b(1), b'(1) and c(10-14). The alpha and beta chains form an alternating ring which encloses part of the gamma chain. F(1) is attached to F(0) by a central stalk formed by the gamma and epsilon chains, while a peripheral stalk is formed by the delta, b and b' chains.

The protein localises to the cellular thylakoid membrane. F(1)F(0) ATP synthase produces ATP from ADP in the presence of a proton or sodium gradient. F-type ATPases consist of two structural domains, F(1) containing the extramembraneous catalytic core and F(0) containing the membrane proton channel, linked together by a central stalk and a peripheral stalk. During catalysis, ATP synthesis in the catalytic domain of F(1) is coupled via a rotary mechanism of the central stalk subunits to proton translocation. Its function is as follows. Component of the F(0) channel, it forms part of the peripheral stalk, linking F(1) to F(0). The b'-subunit is a diverged and duplicated form of b found in plants and photosynthetic bacteria. The protein is ATP synthase subunit b' of Synechococcus elongatus (strain ATCC 33912 / PCC 7942 / FACHB-805) (Anacystis nidulans R2).